Consider the following 460-residue polypeptide: UDP-N-acetylmuramoylalanine--D-glutamate ligase (460 aa).

An ATP-binding site is contributed by 115–121; sequence GTNGKTT.

This sequence belongs to the MurCDEF family.

It localises to the cytoplasm. It catalyses the reaction UDP-N-acetyl-alpha-D-muramoyl-L-alanine + D-glutamate + ATP = UDP-N-acetyl-alpha-D-muramoyl-L-alanyl-D-glutamate + ADP + phosphate + H(+). It functions in the pathway cell wall biogenesis; peptidoglycan biosynthesis. In terms of biological role, cell wall formation. Catalyzes the addition of glutamate to the nucleotide precursor UDP-N-acetylmuramoyl-L-alanine (UMA). In Salinibacter ruber (strain DSM 13855 / M31), this protein is UDP-N-acetylmuramoylalanine--D-glutamate ligase.